The chain runs to 236 residues: Leucyl/phenylalanyl-tRNA--protein transferase (236 aa).

This sequence belongs to the L/F-transferase family.

The protein resides in the cytoplasm. It carries out the reaction N-terminal L-lysyl-[protein] + L-leucyl-tRNA(Leu) = N-terminal L-leucyl-L-lysyl-[protein] + tRNA(Leu) + H(+). It catalyses the reaction N-terminal L-arginyl-[protein] + L-leucyl-tRNA(Leu) = N-terminal L-leucyl-L-arginyl-[protein] + tRNA(Leu) + H(+). The enzyme catalyses L-phenylalanyl-tRNA(Phe) + an N-terminal L-alpha-aminoacyl-[protein] = an N-terminal L-phenylalanyl-L-alpha-aminoacyl-[protein] + tRNA(Phe). Its function is as follows. Functions in the N-end rule pathway of protein degradation where it conjugates Leu, Phe and, less efficiently, Met from aminoacyl-tRNAs to the N-termini of proteins containing an N-terminal arginine or lysine. The protein is Leucyl/phenylalanyl-tRNA--protein transferase of Shewanella loihica (strain ATCC BAA-1088 / PV-4).